A 348-amino-acid polypeptide reads, in one-letter code: tRNA N6-adenosine threonylcarbamoyltransferase (348 aa).

2 residues coordinate Fe cation: His111 and His115. Substrate-binding positions include 134–138, Asp167, Gly180, and Asn276; that span reads LVSGG. A Fe cation-binding site is contributed by Asp304.

It belongs to the KAE1 / TsaD family. Requires Fe(2+) as cofactor.

The protein localises to the cytoplasm. The catalysed reaction is L-threonylcarbamoyladenylate + adenosine(37) in tRNA = N(6)-L-threonylcarbamoyladenosine(37) in tRNA + AMP + H(+). In terms of biological role, required for the formation of a threonylcarbamoyl group on adenosine at position 37 (t(6)A37) in tRNAs that read codons beginning with adenine. Is involved in the transfer of the threonylcarbamoyl moiety of threonylcarbamoyl-AMP (TC-AMP) to the N6 group of A37, together with TsaE and TsaB. TsaD likely plays a direct catalytic role in this reaction. The protein is tRNA N6-adenosine threonylcarbamoyltransferase of Bordetella petrii (strain ATCC BAA-461 / DSM 12804 / CCUG 43448).